Here is a 223-residue protein sequence, read N- to C-terminus: UPF0319 protein VPA1584 (223 aa).

Residues Met-1 to Ala-21 form the signal peptide.

Belongs to the UPF0319 family.

The polypeptide is UPF0319 protein VPA1584 (Vibrio parahaemolyticus serotype O3:K6 (strain RIMD 2210633)).